The chain runs to 358 residues: Putative zinc metalloprotease BH06270 (358 aa).

A Zn(2+)-binding site is contributed by histidine 7. The active site involves glutamate 8. Zn(2+) is bound at residue histidine 11. The next 3 helical transmembrane spans lie at 89 to 111, 282 to 304, and 332 to 354; these read ATVF…FFFF, FLSL…LFPI, and IIFR…NDYF. Positions 102–177 constitute a PDZ domain; that stretch reads TVVILTFFFF…IEFKMERSGQ (76 aa).

This sequence belongs to the peptidase M50B family. Zn(2+) serves as cofactor.

The protein resides in the cell inner membrane. The polypeptide is Putative zinc metalloprotease BH06270 (Bartonella henselae (strain ATCC 49882 / DSM 28221 / CCUG 30454 / Houston 1) (Rochalimaea henselae)).